A 61-amino-acid chain; its full sequence is Large ribosomal subunit protein uL30 (61 aa).

This sequence belongs to the universal ribosomal protein uL30 family. Part of the 50S ribosomal subunit.

This Bifidobacterium adolescentis (strain ATCC 15703 / DSM 20083 / NCTC 11814 / E194a) protein is Large ribosomal subunit protein uL30.